The primary structure comprises 670 residues: Probable Rho-GTPase-activating protein 9 (670 aa).

The region spanning 3–392 is the F-BAR domain; sequence DGFSNSFWSR…SFKNLDSLRD (390 aa). The disordered stretch occupies residues 141–161; that stretch reads NSKKSNLTDRKPIPTSRKSNK. Residues 425–622 form the Rho-GAP domain; sequence SSLTEDNLIV…DLINEFENLF (198 aa). Thr-640 carries the post-translational modification Phosphothreonine. Positions 641-663 are enriched in polar residues; that stretch reads PITTSPQKLKLPRSSSPCKNPSP. The interval 641–670 is disordered; sequence PITTSPQKLKLPRSSSPCKNPSPTRRFRPF. Ser-645 is modified (phosphoserine).

The protein resides in the cytoplasm. This Schizosaccharomyces pombe (strain 972 / ATCC 24843) (Fission yeast) protein is Probable Rho-GTPase-activating protein 9 (rga9).